A 249-amino-acid polypeptide reads, in one-letter code: Cell division protein FtsQ (249 aa).

Residues 1 to 6 lie on the Cytoplasmic side of the membrane; the sequence is MKFILF. The helical transmembrane segment at 7-23 threads the bilayer; that stretch reads ALLVSAGSWYGWKQLHS. The Periplasmic segment spans residues 24 to 249; it reads QDAVSKPIRY…YKNVMKERRI (226 aa). The POTRA domain occupies 29 to 98; the sequence is KPIRYVKIEG…DAVHIKITEQ (70 aa).

Belongs to the FtsQ/DivIB family. FtsQ subfamily. As to quaternary structure, part of a complex composed of FtsB, FtsL and FtsQ.

The protein resides in the cell inner membrane. Essential cell division protein. May link together the upstream cell division proteins, which are predominantly cytoplasmic, with the downstream cell division proteins, which are predominantly periplasmic. May control correct divisome assembly. The sequence is that of Cell division protein FtsQ from Methylomonas methanica (strain DSM 25384 / MC09).